The primary structure comprises 615 residues: Nuclear receptor subfamily 1 group D member 1 (615 aa).

The span at 1 to 12 (MTTLDSNNNTGG) shows a compositional bias: polar residues. The required for phosphorylation by CSNK1E and cytoplasmic localization stretch occupies residues 1–70 (MTTLDSNNNT…TQDPARSFGT (70 aa)). The tract at residues 1-120 (MTTLDSNNNT…SSRVSPSKGT (120 aa)) is disordered. Residues 1–129 (MTTLDSNNNT…TSNITKLNGM (129 aa)) are modulating. Residues 14–34 (ITYIGSSGSSPSRTSPESLYS) are compositionally biased toward low complexity. Polar residues predominate over residues 35 to 48 (DSSNGSFQSLTQGC). Positions 49 to 285 (PTYFPPSPTG…PPRSPSPEPT (237 aa)) are crucial for activation of GJA1. Ser-55 and Ser-59 each carry phosphoserine; by GSK3-beta. Residues 72–103 (PPSLSDDSSPSSASSSSSSSSSSFYNGSPPGS) are compositionally biased toward low complexity. Residues 130 to 206 (VLLCKVCGDV…VGMSRDAVRF (77 aa)) constitute a DNA-binding region (nuclear receptor). NR C4-type zinc fingers lie at residues 133–153 (CKVC…CEGC) and 170–194 (CLKN…FKKC). Residues Lys-192 and Lys-193 each carry the N6-acetyllysine; by KAT5 modification. Disordered stretches follow at residues 235 to 287 (LCPL…PTVE), 312 to 337 (PGNF…SQGC), and 357 to 385 (NGLR…PNSN). Over residues 253-262 (PSPPPAPAPT) the composition is skewed to pro residues. Thr-275 carries the phosphothreonine; by CDK1 modification. The NR LBD domain maps to 285 to 615 (TVEDVISQVA…KLLSFRVDAQ (331 aa)). Residue Lys-401 is modified to N6-acetyllysine. Residue Cys-419 coordinates heme. The residue at position 592 (Lys-592) is an N6-acetyllysine. Residue His-603 participates in heme binding.

The protein belongs to the nuclear hormone receptor family. NR1 subfamily. In terms of assembly, binds DNA as a monomer or a homodimer. Interacts with C1D, NR2E3, SP1 and ZNHIT1. Interacts with OPHN1 (via C-terminus). Interacts with PER2; the interaction associates PER2 to BMAL1 promoter region. Interacts with CRY1. Interacts with CCAR2. Interacts with SIAH2. Interacts with FBXW7 and CDK1. Interacts with HUWE1. Interacts with NR0B2. Interacts with NFIL3. Interacts (via domain NR LBD) with HSP90AA1 and HSP90AB1. Ubiquitinated, leading to its proteasomal degradation. Ubiquitinated by the SCF(FBXW7) complex when phosphorylated by CDK1 leading to its proteasomal degradation. Ubiquitinated by SIAH2; leading to its proteasomal degradation. Rapidly ubiquitinated in response to inflammatory triggers and sumoylation is a prerequisite to its ubiquitination. In terms of processing, sumoylated by UBE2I, desumoylated by SENP1, and sumoylation is a prerequisite to its ubiquitination. Post-translationally, phosphorylated by CSNK1E; phosphorylation enhances its cytoplasmic localization. Undergoes lysosome-mediated degradation in a time-dependent manner in the liver.

The protein resides in the nucleus. Its subcellular location is the cytoplasm. It is found in the cell projection. It localises to the dendrite. The protein localises to the dendritic spine. Functionally, transcriptional repressor which coordinates circadian rhythm and metabolic pathways in a heme-dependent manner. Integral component of the complex transcription machinery that governs circadian rhythmicity and forms a critical negative limb of the circadian clock by directly repressing the expression of core clock components BMAL1, CLOCK and CRY1. Also regulates genes involved in metabolic functions, including lipid and bile acid metabolism, adipogenesis, gluconeogenesis and the macrophage inflammatory response. Acts as a receptor for heme which stimulates its interaction with the NCOR1/HDAC3 corepressor complex, enhancing transcriptional repression. Recognizes two classes of DNA response elements within the promoter of its target genes and can bind to DNA as either monomers or homodimers, depending on the nature of the response element. Binds as a monomer to a response element composed of the consensus half-site motif 5'-[A/G]GGTCA-3' preceded by an A/T-rich 5' sequence (RevRE), or as a homodimer to a direct repeat of the core motif spaced by two nucleotides (RevDR-2). Acts as a potent competitive repressor of ROR alpha (RORA) function and regulates the levels of its ligand heme by repressing the expression of PPARGC1A, a potent inducer of heme synthesis. Regulates lipid metabolism by repressing the expression of APOC3 and by influencing the activity of sterol response element binding proteins (SREBPs); represses INSIG2 which interferes with the proteolytic activation of SREBPs which in turn govern the rhythmic expression of enzymes with key functions in sterol and fatty acid synthesis. Regulates gluconeogenesis via repression of G6PC1 and PEPCK and adipocyte differentiation via repression of PPARG. Regulates glucagon release in pancreatic alpha-cells via the AMPK-NAMPT-SIRT1 pathway and the proliferation, glucose-induced insulin secretion and expression of key lipogenic genes in pancreatic-beta cells. Positively regulates bile acid synthesis by increasing hepatic expression of CYP7A1 via repression of NR0B2 and NFIL3 which are negative regulators of CYP7A1. Modulates skeletal muscle oxidative capacity by regulating mitochondrial biogenesis and autophagy; controls mitochondrial biogenesis and respiration by interfering with the STK11-PRKAA1/2-SIRT1-PPARGC1A signaling pathway. Represses the expression of SERPINE1/PAI1, an important modulator of cardiovascular disease and the expression of inflammatory cytokines and chemokines in macrophages. Represses gene expression at a distance in macrophages by inhibiting the transcription of enhancer-derived RNAs (eRNAs). Plays a role in the circadian regulation of body temperature and negatively regulates thermogenic transcriptional programs in brown adipose tissue (BAT); imposes a circadian oscillation in BAT activity, increasing body temperature when awake and depressing thermogenesis during sleep. In concert with NR2E3, regulates transcriptional networks critical for photoreceptor development and function. In addition to its activity as a repressor, can also act as a transcriptional activator. In the ovarian granulosa cells acts as a transcriptional activator of STAR which plays a role in steroid biosynthesis. In collaboration with SP1, activates GJA1 transcription in a heme-independent manner. Represses the transcription of CYP2B10, CYP4A10 and CYP4A14. Represses the transcription of CES2. Represses and regulates the circadian expression of TSHB in a NCOR1-dependent manner. Negatively regulates the protein stability of NR3C1 and influences the time-dependent subcellular distribution of NR3C1, thereby affecting its transcriptional regulatory activity. Plays a critical role in the circadian control of neutrophilic inflammation in the lung; under resting, non-stress conditions, acts as a rhythmic repressor to limit inflammatory activity whereas in the presence of inflammatory triggers undergoes ubiquitin-mediated degradation thereby relieving inhibition of the inflammatory response. Plays a key role in the circadian regulation of microglial activation and neuroinflammation; suppresses microglial activation through the NF-kappaB pathway in the central nervous system. Plays a role in the regulation of the diurnal rhythms of lipid and protein metabolism in the skeletal muscle via transcriptional repression of genes controlling lipid and amino acid metabolism in the muscle. The polypeptide is Nuclear receptor subfamily 1 group D member 1 (Nr1d1) (Rattus norvegicus (Rat)).